A 243-amino-acid polypeptide reads, in one-letter code: Protein DMP8 (243 aa).

Residues Met1–Leu37 form a disordered region. The segment covering Thr14 to Pro29 has biased composition (low complexity). 4 consecutive transmembrane segments (helical) span residues Met70–Ile90, Gly98–Phe118, Val174–Asp194, and Val212–Pro232.

It belongs to the plant DMP1 protein family. As to expression, restricted to flowers.

It is found in the endoplasmic reticulum membrane. Its subcellular location is the vacuole membrane. Involved in membrane remodeling. This is Protein DMP8 from Arabidopsis thaliana (Mouse-ear cress).